We begin with the raw amino-acid sequence, 250 residues long: Sulfate transporter CysZ (250 aa).

Transmembrane regions (helical) follow at residues 26–46 (LFVL…IYLA), 71–91 (ILWP…FTML), 150–170 (LFIL…WLLF), and 211–231 (IVYL…AAVA).

It belongs to the CysZ family.

It is found in the cell inner membrane. In terms of biological role, high affinity, high specificity proton-dependent sulfate transporter, which mediates sulfate uptake. Provides the sulfur source for the cysteine synthesis pathway. The protein is Sulfate transporter CysZ of Pseudomonas fluorescens (strain Pf0-1).